We begin with the raw amino-acid sequence, 1907 residues long: Receptor-type tyrosine-protein phosphatase S (1907 aa).

The N-terminal stretch at 1–29 is a signal peptide; it reads MAPTWSPSVVSVVGPVGLFLVLLARGCLA. Residues 30–1257 are Extracellular-facing; it reads EEPPRFIREP…PQPIVDGEEG (1228 aa). Ig-like C2-type domains are found at residues 33–123, 135–224, and 232–314; these read PRFI…AKLT, PNID…ANLY, and PRFS…AQIT. 2 disulfides stabilise this stretch: Cys54–Cys107 and Cys156–Cys207. An important for binding to glycosaminoglycan chains region spans residues 68 to 72; the sequence is KKGKK. 2 N-linked (GlcNAc...) asparagine glycosylation sites follow: Asn250 and Asn295. A disulfide bridge connects residues Cys253 and Cys298. 8 Fibronectin type-III domains span residues 321–411, 416–510, 514–603, 608–705, 710–809, 810–906, 907–1008, and 1011–1095; these read APGT…TGEQ, APRN…TQQG, QPMN…TLQA, PPQD…TDED, PPRK…TKGA, VLGR…APRG, FPQI…LARD, and SPKN…TAFN. Residues 691–700 show a composition bias toward low complexity; it reads PGPESSPVVV. Positions 691 to 711 are disordered; the sequence is PGPESSPVVVRTDEDVPSAPP. A glycan (N-linked (GlcNAc...) asparagine) is linked at Asn720. Asn916 carries N-linked (GlcNAc...) asparagine glycosylation. A helical membrane pass occupies residues 1258–1278; that stretch reads LIWVIGPVLAVVFIICIVIAI. The Cytoplasmic portion of the chain corresponds to 1279–1907; sequence LLYKNKPDSK…YLGSFDHYAT (629 aa). The segment covering 1286-1296 has biased composition (basic and acidic residues); that stretch reads DSKRKDSEPRT. The disordered stretch occupies residues 1286–1313; sequence DSKRKDSEPRTKCLLNNADLAPHHPKDP. 2 Tyrosine-protein phosphatase domains span residues 1352-1607 and 1639-1898; these read LSQE…LLEA and MELE…ALEY. Substrate contacts are provided by residues Asp1516, 1548–1554, and Gln1592; that span reads CSAGVGR. Cys1548 acts as the Phosphocysteine intermediate in catalysis. Residue Cys1839 is the Phosphocysteine intermediate of the active site.

The protein belongs to the protein-tyrosine phosphatase family. Receptor class 2A subfamily. In terms of assembly, binding to large heparan sulfate proteoglycan structures promotes oligomerization. Binding to chondroitin sulfate proteoglycan does not lead to oligomerization. Interacts (via Ig-like domains) with NTRK3. Interacts (via Ig-like domains) with NTRK1, but does not form detectable complexes with NTRK2. Interacts with PPFIA1, PPFIA2 and PPFIA3. A cleavage occurs, separating the extracellular domain from the transmembrane segment. This process called 'ectodomain shedding' is thought to be involved in receptor desensitization, signal transduction and/or membrane localization. In terms of tissue distribution, detected in brain cortex, cerebellum and thoracic spinal cord (at protein level). Detected in motor cortex and white matter of the spinal cord, but not in spinal cord gray matter. Isoform 1 and isoform 6 are predominantly expressed in the brain (cerebrum and cerebellum) and to a lesser extent in the heart and skeletal muscle. Also found in neuronal-derived cell lines. Detected in the ganglion cell layer of the retina and in glial cells along the optic nerve. Detected in bone marrow and spleen plasmacytoid dendritic cells.

It is found in the cell membrane. The protein localises to the cell projection. Its subcellular location is the axon. It localises to the perikaryon. The protein resides in the cytoplasmic vesicle. It is found in the secretory vesicle. The protein localises to the synaptic vesicle membrane. Its subcellular location is the synapse. It localises to the synaptosome. The protein resides in the postsynaptic density. It is found in the neuron projection. The protein localises to the growth cone. It carries out the reaction O-phospho-L-tyrosyl-[protein] + H2O = L-tyrosyl-[protein] + phosphate. Cell surface receptor that binds to glycosaminoglycans, including chondroitin sulfate proteoglycans and heparan sulfate proteoglycans. Binding to chondroitin sulfate and heparan sulfate proteoglycans has opposite effects on PTPRS oligomerization and regulation of neurite outgrowth. Contributes to the inhibition of neurite and axonal outgrowth by chondroitin sulfate proteoglycans, also after nerve transection. Plays a role in stimulating neurite outgrowth in response to the heparan sulfate proteoglycan GPC2. Required for normal brain development, especially for normal development of the pituitary gland and the olfactory bulb. Functions as a tyrosine phosphatase. Mediates dephosphorylation of NTRK1, NTRK2 and NTRK3. Plays a role in down-regulation of signaling cascades that lead to the activation of Akt and MAP kinases. Down-regulates TLR9-mediated activation of NF-kappa-B, as well as production of TNF, interferon alpha and interferon beta. The sequence is that of Receptor-type tyrosine-protein phosphatase S (Ptprs) from Mus musculus (Mouse).